The chain runs to 95 residues: Glutamyl-tRNA(Gln) amidotransferase subunit C (95 aa).

This sequence belongs to the GatC family. As to quaternary structure, heterotrimer of A, B and C subunits.

It catalyses the reaction L-glutamyl-tRNA(Gln) + L-glutamine + ATP + H2O = L-glutaminyl-tRNA(Gln) + L-glutamate + ADP + phosphate + H(+). It carries out the reaction L-aspartyl-tRNA(Asn) + L-glutamine + ATP + H2O = L-asparaginyl-tRNA(Asn) + L-glutamate + ADP + phosphate + 2 H(+). In terms of biological role, allows the formation of correctly charged Asn-tRNA(Asn) or Gln-tRNA(Gln) through the transamidation of misacylated Asp-tRNA(Asn) or Glu-tRNA(Gln) in organisms which lack either or both of asparaginyl-tRNA or glutaminyl-tRNA synthetases. The reaction takes place in the presence of glutamine and ATP through an activated phospho-Asp-tRNA(Asn) or phospho-Glu-tRNA(Gln). The chain is Glutamyl-tRNA(Gln) amidotransferase subunit C from Mesorhizobium japonicum (strain LMG 29417 / CECT 9101 / MAFF 303099) (Mesorhizobium loti (strain MAFF 303099)).